The primary structure comprises 192 residues: Cell division protein SepF (192 aa).

A disordered region spans residues 15 to 70 (GDPLEYEEDGEEYEQVYREENKREEARRATAGTAAAATPTAAAQASDAAPMGSGPA). The span at 18-28 (LEYEEDGEEYE) shows a compositional bias: acidic residues. The span at 29–42 (QVYREENKREEARR) shows a compositional bias: basic and acidic residues. The span at 43–63 (ATAGTAAAATPTAAAQASDAA) shows a compositional bias: low complexity.

Belongs to the SepF family. In terms of assembly, homodimer. Interacts with FtsZ.

It localises to the cytoplasm. Cell division protein that is part of the divisome complex and is recruited early to the Z-ring. Probably stimulates Z-ring formation, perhaps through the cross-linking of FtsZ protofilaments. Its function overlaps with FtsA. The polypeptide is Cell division protein SepF (Gloeobacter violaceus (strain ATCC 29082 / PCC 7421)).